A 197-amino-acid polypeptide reads, in one-letter code: Beta-crystallin A2 (197 aa).

The segment at M1–P11 is N-terminal arm. Beta/gamma crystallin 'Greek key' domains lie at A12–N52 and G53–L99. The tract at residues C100–D105 is connecting peptide. Beta/gamma crystallin 'Greek key' domains are found at residues S106–S147 and G148–Q196.

It belongs to the beta/gamma-crystallin family. Homo/heterodimer, or complexes of higher-order. The structure of beta-crystallin oligomers seems to be stabilized through interactions between the N-terminal arms.

Crystallins are the dominant structural components of the vertebrate eye lens. This chain is Beta-crystallin A2 (CRYBA2), found in Oryctolagus cuniculus (Rabbit).